A 471-amino-acid polypeptide reads, in one-letter code: Ribulose bisphosphate carboxylase large chain (471 aa).

Positions 119 and 169 each coordinate substrate. Lys-171 functions as the Proton acceptor in the catalytic mechanism. Lys-173 serves as a coordination point for substrate. Lys-197, Asp-199, and Glu-200 together coordinate Mg(2+). Lys-197 carries the post-translational modification N6-carboxylysine. His-290 functions as the Proton acceptor in the catalytic mechanism. 3 residues coordinate substrate: Arg-291, His-323, and Ser-375.

Belongs to the RuBisCO large chain family. Type I subfamily. In terms of assembly, heterohexadecamer of 8 large chains and 8 small chains; disulfide-linked. The disulfide link is formed within the large subunit homodimers. Mg(2+) is required as a cofactor. Post-translationally, the disulfide bond which can form in the large chain dimeric partners within the hexadecamer appears to be associated with oxidative stress and protein turnover.

It localises to the carboxysome. The enzyme catalyses 2 (2R)-3-phosphoglycerate + 2 H(+) = D-ribulose 1,5-bisphosphate + CO2 + H2O. The catalysed reaction is D-ribulose 1,5-bisphosphate + O2 = 2-phosphoglycolate + (2R)-3-phosphoglycerate + 2 H(+). Functionally, ruBisCO catalyzes two reactions: the carboxylation of D-ribulose 1,5-bisphosphate, the primary event in carbon dioxide fixation, as well as the oxidative fragmentation of the pentose substrate in the photorespiration process. Both reactions occur simultaneously and in competition at the same active site. This Microcystis aeruginosa (strain NIES-843 / IAM M-2473) protein is Ribulose bisphosphate carboxylase large chain.